A 208-amino-acid polypeptide reads, in one-letter code: Large ribosomal subunit protein uL4 (208 aa).

The disordered stretch occupies residues 45–84 (RQGTHKVKNRSEVRGGGKKPYRQKGTGHARQGSSRSGLMS). Over residues 60–71 (GGKKPYRQKGTG) the composition is skewed to basic residues.

This sequence belongs to the universal ribosomal protein uL4 family. In terms of assembly, part of the 50S ribosomal subunit.

Its function is as follows. One of the primary rRNA binding proteins, this protein initially binds near the 5'-end of the 23S rRNA. It is important during the early stages of 50S assembly. It makes multiple contacts with different domains of the 23S rRNA in the assembled 50S subunit and ribosome. In terms of biological role, forms part of the polypeptide exit tunnel. The protein is Large ribosomal subunit protein uL4 of Prosthecochloris aestuarii (strain DSM 271 / SK 413).